The following is a 164-amino-acid chain: Putative 4-hydroxy-4-methyl-2-oxoglutarate aldolase (164 aa).

Residues 79-82 (GDRL) and Arg101 each bind substrate. Asp102 lines the a divalent metal cation pocket.

This sequence belongs to the class II aldolase/RraA-like family. In terms of assembly, homotrimer. Requires a divalent metal cation as cofactor.

It carries out the reaction 4-hydroxy-4-methyl-2-oxoglutarate = 2 pyruvate. It catalyses the reaction oxaloacetate + H(+) = pyruvate + CO2. Catalyzes the aldol cleavage of 4-hydroxy-4-methyl-2-oxoglutarate (HMG) into 2 molecules of pyruvate. Also contains a secondary oxaloacetate (OAA) decarboxylase activity due to the common pyruvate enolate transition state formed following C-C bond cleavage in the retro-aldol and decarboxylation reactions. The polypeptide is Putative 4-hydroxy-4-methyl-2-oxoglutarate aldolase (Halorhodospira halophila (strain DSM 244 / SL1) (Ectothiorhodospira halophila (strain DSM 244 / SL1))).